Here is a 202-residue protein sequence, read N- to C-terminus: Stress enhanced protein 2, chloroplastic (202 aa).

The N-terminal 60 residues, Met1–Tyr60, are a transit peptide targeting the chloroplast. Transmembrane regions (helical) follow at residues Leu111–Phe131 and Ala142–Ser162.

The protein belongs to the ELIP/psbS family.

It localises to the plastid. The protein resides in the chloroplast thylakoid membrane. May be involved in non-photochemical quenching, a process that maintains the balance between dissipation and utilization of light energy to minimize generation of oxidizing molecules, thereby protecting the plant against photo-oxidative damage. May play a photoprotective role in the thylakoid membrane in response to light stress. In Arabidopsis thaliana (Mouse-ear cress), this protein is Stress enhanced protein 2, chloroplastic.